The following is a 902-amino-acid chain: MSQQTTIRKLAELVNTPVDKLLVQLAEAGMKFSGPDQVVTSTEKMKLLGFLRRTHGKADTPAEAASEAAKKITLNRRKLQEVTVNAGRTKTTVNVEVRQKRTYVKSENEGSGRAAPMTPDEERADILAKLAASRQRNLDEQQRLAESDRARDEAIQRKRDEEQAAKDRVEAERKAAEEAAAAASAPAPVAAAPAPSSAPAARAPSSPSSAPRPARPAGASPASRPATPARPDDRNNAAKHKTRGSHVMVAGVEDDDATKRFAGQLHLSAADRARRSNVRGKPTGRPGSSSSRRNDGGRGSNQSNSGPHGFERPTAPVVREVAIGETITVADLAQKLALKGGDVVKALFKMGVMATITQSIDHDTAALVTEELGHKAVRADNADFEDALLAHAEDAQGETTSRPPVVTIMGHVDHGKTSLLDYIRRTKIASGEAGGITQHIGAYHVETGRGVISFLDTPGHAAFTSMRARGAKITDIVVLVVAADDGVMPQTKEAVAHAKAAGVPLIVAVNKIDKAGADPLRVKNELLAENVVAEDFGGDTQFIEVSAKVGTGVDTLLDAISLQAEVLELKAVADGRASGTVIESSLDKGRGPVATVLVQQGALKRGDYLVCGIQYGRVRALFDETGHQPASAGPSIPVQVLGLSGVPEAGDDFVVVDDERLAKDVAQQRETKRRESRLVASATNRMEDILAQMGKGEGQQVLNLVIKADVQGSVEALKQSLVALSNDDIRINVIHSGVGGITESDANSAAASKATIIGFNVRADASARKIVESNGIDLRYFSIIYDVIDQVKQVASGLLGVEIREEIIGIAQVRDVFRSSKFGAVAGCMIIEGVVKRSKPIRVLRDSVVVFEGELESLRRFKENVDEVRNGTECGIGVKAYNDVKAGDQIECFERIEVARTL.

A compositionally biased stretch (basic and acidic residues) spans 137 to 177 (NLDEQQRLAESDRARDEAIQRKRDEEQAAKDRVEAERKAAE). Disordered stretches follow at residues 137–248 (NLDE…SHVM) and 266–314 (HLSA…ERPT). 2 stretches are compositionally biased toward low complexity: residues 178–229 (EAAA…ATPA) and 279–291 (RGKPTGRPGSSSS). One can recognise a tr-type G domain in the interval 401-570 (SRPPVVTIMG…SLQAEVLELK (170 aa)). The interval 410-417 (GHVDHGKT) is G1. Residue 410 to 417 (GHVDHGKT) participates in GTP binding. A G2 region spans residues 435–439 (GITQH). Residues 456-459 (DTPG) are G3. Residues 456 to 460 (DTPGH) and 510 to 513 (NKID) each bind GTP. A G4 region spans residues 510–513 (NKID). The G5 stretch occupies residues 546-548 (SAK).

It belongs to the TRAFAC class translation factor GTPase superfamily. Classic translation factor GTPase family. IF-2 subfamily.

The protein resides in the cytoplasm. One of the essential components for the initiation of protein synthesis. Protects formylmethionyl-tRNA from spontaneous hydrolysis and promotes its binding to the 30S ribosomal subunits. Also involved in the hydrolysis of GTP during the formation of the 70S ribosomal complex. This chain is Translation initiation factor IF-2, found in Xanthomonas campestris pv. campestris (strain 8004).